Consider the following 212-residue polypeptide: N-(5'-phosphoribosyl)anthranilate isomerase (212 aa).

This sequence belongs to the TrpF family.

It catalyses the reaction N-(5-phospho-beta-D-ribosyl)anthranilate = 1-(2-carboxyphenylamino)-1-deoxy-D-ribulose 5-phosphate. It functions in the pathway amino-acid biosynthesis; L-tryptophan biosynthesis; L-tryptophan from chorismate: step 3/5. In Cereibacter sphaeroides (strain ATCC 17029 / ATH 2.4.9) (Rhodobacter sphaeroides), this protein is N-(5'-phosphoribosyl)anthranilate isomerase.